Consider the following 224-residue polypeptide: Protein FMP52, mitochondrial (224 aa).

It belongs to the FMP52 family.

Its subcellular location is the mitochondrion outer membrane. This chain is Protein FMP52, mitochondrial (FMP52), found in Kluyveromyces lactis (strain ATCC 8585 / CBS 2359 / DSM 70799 / NBRC 1267 / NRRL Y-1140 / WM37) (Yeast).